The following is a 523-amino-acid chain: Mediator of RNA polymerase II transcription subunit 1.2 (523 aa).

This sequence belongs to the Mediator complex subunit 1 family. As to quaternary structure, component of the Mediator complex.

It is found in the nucleus. Functionally, component of the Mediator complex, a coactivator involved in the regulated transcription of nearly all RNA polymerase II-dependent genes. Mediator functions as a bridge to convey information from gene-specific regulatory proteins to the basal RNA polymerase II transcription machinery. Mediator is recruited to promoters by direct interactions with regulatory proteins and serves as a scaffold for the assembly of a functional preinitiation complex with RNA polymerase II and the general transcription factors. In Caenorhabditis briggsae, this protein is Mediator of RNA polymerase II transcription subunit 1.2 (mdt-1.2).